Consider the following 145-residue polypeptide: Ornithine decarboxylase antizyme (145 aa).

It belongs to the ODC antizyme family. Interacts with ODC1 and thereby sterically blocks ODC homodimerization.

In terms of biological role, ornithine decarboxylase (ODC) antizyme protein that negatively regulates ODC activity and intracellular polyamine biosynthesis and uptake in response to increased intracellular polyamine levels. Binds to ODC monomers, inhibiting the assembly of the functional ODC homodimer, and targets the monomers for ubiquitin-independent proteolytic destruction by the 26S proteasome. This Onchocerca volvulus protein is Ornithine decarboxylase antizyme.